We begin with the raw amino-acid sequence, 213 residues long: Isopentenyl-diphosphate Delta-isomerase (213 aa).

The segment covering 1–10 has biased composition (basic and acidic residues); the sequence is MRDSMSEADR. The interval 1 to 34 is disordered; sequence MRDSMSEADRSSPGSGKTDREDETAENATQDVIA. Residues His-51, His-58, and His-95 each contribute to the Mn(2+) site. One can recognise a Nudix hydrolase domain in the interval 56–193; that stretch reads VRHRAFTCLL…RQLRLCPWFE (138 aa). Glu-113 provides a ligand contact to Mg(2+). Mn(2+)-binding residues include Glu-142 and Glu-144. Glu-144 is a catalytic residue.

The protein belongs to the IPP isomerase type 1 family. It depends on Mg(2+) as a cofactor. Mn(2+) serves as cofactor.

The protein localises to the cytoplasm. The enzyme catalyses isopentenyl diphosphate = dimethylallyl diphosphate. Its pathway is isoprenoid biosynthesis; dimethylallyl diphosphate biosynthesis; dimethylallyl diphosphate from isopentenyl diphosphate: step 1/1. In terms of biological role, catalyzes the 1,3-allylic rearrangement of the homoallylic substrate isopentenyl (IPP) to its highly electrophilic allylic isomer, dimethylallyl diphosphate (DMAPP). The chain is Isopentenyl-diphosphate Delta-isomerase from Halobacterium salinarum (strain ATCC 700922 / JCM 11081 / NRC-1) (Halobacterium halobium).